The following is a 415-amino-acid chain: 3-isopropylmalate dehydratase large subunit (415 aa).

[4Fe-4S] cluster contacts are provided by Cys-295, Cys-353, and Cys-356.

It belongs to the aconitase/IPM isomerase family. LeuC type 2 subfamily. As to quaternary structure, heterodimer of LeuC and LeuD. The cofactor is [4Fe-4S] cluster.

The enzyme catalyses (2R,3S)-3-isopropylmalate = (2S)-2-isopropylmalate. Its pathway is amino-acid biosynthesis; L-leucine biosynthesis; L-leucine from 3-methyl-2-oxobutanoate: step 2/4. Catalyzes the isomerization between 2-isopropylmalate and 3-isopropylmalate, via the formation of 2-isopropylmaleate. The polypeptide is 3-isopropylmalate dehydratase large subunit (Pyrobaculum neutrophilum (strain DSM 2338 / JCM 9278 / NBRC 100436 / V24Sta) (Thermoproteus neutrophilus)).